A 532-amino-acid polypeptide reads, in one-letter code: CTP synthase (532 aa).

Residues 1–267 form an amidoligase domain region; the sequence is MTKYIFVTGG…DDIVLEHLQL (267 aa). CTP is bound at residue Ser-13. UTP is bound at residue Ser-13. 14–19 contacts ATP; that stretch reads SIGKGI. Tyr-54 contributes to the L-glutamine binding site. Asp-71 is a binding site for ATP. Asp-71 and Glu-141 together coordinate Mg(2+). Residues 148–150, 188–193, and Lys-224 contribute to the CTP site; these read DIE and KTKPTQ. UTP contacts are provided by residues 188 to 193 and Lys-224; that span reads KTKPTQ. The 241-residue stretch at 292-532 folds into the Glutamine amidotransferase type-1 domain; that stretch reads RIGLVGKYVS…DFVGAALNNK (241 aa). Gly-354 provides a ligand contact to L-glutamine. Cys-381 functions as the Nucleophile; for glutamine hydrolysis in the catalytic mechanism. L-glutamine is bound by residues 382-385, Glu-405, and Arg-462; that span reads LGMQ. Active-site residues include His-507 and Glu-509.

Belongs to the CTP synthase family. In terms of assembly, homotetramer.

It catalyses the reaction UTP + L-glutamine + ATP + H2O = CTP + L-glutamate + ADP + phosphate + 2 H(+). The enzyme catalyses L-glutamine + H2O = L-glutamate + NH4(+). The catalysed reaction is UTP + NH4(+) + ATP = CTP + ADP + phosphate + 2 H(+). The protein operates within pyrimidine metabolism; CTP biosynthesis via de novo pathway; CTP from UDP: step 2/2. Allosterically activated by GTP, when glutamine is the substrate; GTP has no effect on the reaction when ammonia is the substrate. The allosteric effector GTP functions by stabilizing the protein conformation that binds the tetrahedral intermediate(s) formed during glutamine hydrolysis. Inhibited by the product CTP, via allosteric rather than competitive inhibition. Its function is as follows. Catalyzes the ATP-dependent amination of UTP to CTP with either L-glutamine or ammonia as the source of nitrogen. Regulates intracellular CTP levels through interactions with the four ribonucleotide triphosphates. In Listeria monocytogenes serotype 4b (strain F2365), this protein is CTP synthase.